The following is a 546-amino-acid chain: CTP synthase (546 aa).

An amidoligase domain region spans residues 1-265 (MTKYVFVTGG…DEIVCHKLGI (265 aa)). Ser-13 serves as a coordination point for CTP. Ser-13 serves as a coordination point for UTP. ATP-binding positions include 14 to 19 (SLGKGI) and Asp-71. Mg(2+) contacts are provided by Asp-71 and Glu-139. CTP is bound by residues 146–148 (DIE), 186–191 (KTKPTQ), and Lys-222. UTP-binding positions include 186–191 (KTKPTQ) and Lys-222. The Glutamine amidotransferase type-1 domain occupies 290 to 543 (DIAFVGKYVD…VKAAIARHSA (254 aa)). Gly-351 provides a ligand contact to L-glutamine. Residue Cys-378 is the Nucleophile; for glutamine hydrolysis of the active site. Residues 379–382 (LGMQ), Glu-402, and Arg-469 each bind L-glutamine. Active-site residues include His-516 and Glu-518.

Belongs to the CTP synthase family. Homotetramer.

It carries out the reaction UTP + L-glutamine + ATP + H2O = CTP + L-glutamate + ADP + phosphate + 2 H(+). The catalysed reaction is L-glutamine + H2O = L-glutamate + NH4(+). It catalyses the reaction UTP + NH4(+) + ATP = CTP + ADP + phosphate + 2 H(+). It participates in pyrimidine metabolism; CTP biosynthesis via de novo pathway; CTP from UDP: step 2/2. Allosterically activated by GTP, when glutamine is the substrate; GTP has no effect on the reaction when ammonia is the substrate. The allosteric effector GTP functions by stabilizing the protein conformation that binds the tetrahedral intermediate(s) formed during glutamine hydrolysis. Inhibited by the product CTP, via allosteric rather than competitive inhibition. Catalyzes the ATP-dependent amination of UTP to CTP with either L-glutamine or ammonia as the source of nitrogen. Regulates intracellular CTP levels through interactions with the four ribonucleotide triphosphates. This is CTP synthase from Azoarcus sp. (strain BH72).